A 107-amino-acid chain; its full sequence is Putative double-stranded DNA mimic protein Asuc_1259 (107 aa).

Belongs to the putative dsDNA mimic protein family.

May act as a double-stranded DNA (dsDNA) mimic. Probably regulates the activity of a dsDNA-binding protein. This chain is Putative double-stranded DNA mimic protein Asuc_1259, found in Actinobacillus succinogenes (strain ATCC 55618 / DSM 22257 / CCUG 43843 / 130Z).